We begin with the raw amino-acid sequence, 268 residues long: Zinc finger protein SNAI2 (268 aa).

Positions 1–20 are SNAG domain; that stretch reads MPRSFLVKKHFNASKKPNYS. Residues 80-117 are disordered; it reads SSSLGRVSPPPPSDTSSKDHSGSESPISDEEERLQSKL. 4 C2H2-type zinc fingers span residues 128–150, 159–181, 185–207, and 213–235; these read FQCN…KQLH, FSCK…IRTH, CVCK…IRTH, and FSCP…LQTH. The segment at 241 to 264 adopts a C2H2-type 5; atypical zinc-finger fold; the sequence is YQCKNCSKTFSRMSLLHKHEESGC.

This sequence belongs to the snail C2H2-type zinc-finger protein family. Interacts (via SNAG domain) with LIMD1 (via LIM domains), WTIP (via LIM domains) and AJUBA (via LIM domains). Interacts (via zinc fingers) with KPNA2, KPNB1, and TNPO1. May interact (via zinc fingers) with IPO7. Phosphorylated by GSK3B. Once phosphorylated, it becomes a target for ubiquitination. In terms of processing, ubiquitinated by the SCF(FBXO11) complex; ubiquitination requires previous GSK3B-mediated SNAI2 phosphorylation. In terms of tissue distribution, expressed in most adult human tissues, including spleen, thymus, prostate, testis, ovary, small intestine, colon, heart, brain, placenta, lung, liver, skeletal muscle, kidney and pancreas. Not detected in peripheral blood leukocyte. Expressed in the dermis and in all layers of the epidermis, with high levels of expression in the basal layers (at protein level). Expressed in osteoblasts (at protein level). Expressed in mesenchymal stem cells (at protein level). Expressed in breast tumor cells (at protein level).

It is found in the nucleus. The protein localises to the cytoplasm. Functionally, transcriptional repressor that modulates both activator-dependent and basal transcription. Involved in the generation and migration of neural crest cells. Plays a role in mediating RAF1-induced transcriptional repression of the TJ protein, occludin (OCLN) and subsequent oncogenic transformation of epithelial cells. Represses BRCA2 expression by binding to its E2-box-containing silencer and recruiting CTBP1 and HDAC1 in breast cells. In epidermal keratinocytes, binds to the E-box in ITGA3 promoter and represses its transcription. Involved in the regulation of ITGB1 and ITGB4 expression and cell adhesion and proliferation in epidermal keratinocytes. Binds to E-box2 domain of BSG and activates its expression during TGFB1-induced epithelial-mesenchymal transition (EMT) in hepatocytes. Represses E-Cadherin/CDH1 transcription via E-box elements. Involved in osteoblast maturation. Binds to RUNX2 and SOC9 promoters and may act as a positive and negative transcription regulator, respectively, in osteoblasts. Binds to CXCL12 promoter via E-box regions in mesenchymal stem cells and osteoblasts. Plays an essential role in TWIST1-induced EMT and its ability to promote invasion and metastasis. The sequence is that of Zinc finger protein SNAI2 (SNAI2) from Homo sapiens (Human).